Reading from the N-terminus, the 261-residue chain is uncharacterized protein (261 aa).

Residues 1 to 22 (MGVADNEYISVPTGEPVQQQPQ) are disordered. Transmembrane regions (helical) follow at residues 92–112 (IIIL…ILGL), 122–142 (IVVM…IFLF), and 147–167 (INTI…LMNY).

The protein localises to the membrane. This is an uncharacterized protein from Dictyostelium discoideum (Social amoeba).